Reading from the N-terminus, the 796-residue chain is Inactive dipeptidyl peptidase 10 (796 aa).

Topologically, residues 1–34 (MNQTASVSHHIKCQPSKTIKELGSNSPPQRNWKG) are cytoplasmic. The segment at 1-56 (MNQTASVSHHIKCQPSKTIKELGSNSPPQRNWKGIAIALLVILVVCSLITMSVILL) is mediates effects on KCND2. The helical; Signal-anchor for type II membrane protein transmembrane segment at 35–55 (IAIALLVILVVCSLITMSVIL) threads the bilayer. Residues 56 to 796 (LTPDELTNSS…VLPQEPEEDE (741 aa)) are Extracellular-facing. N-linked (GlcNAc...) asparagine glycans are attached at residues Asn-90, Asn-111, and Asn-119. Phosphotyrosine occurs at positions 138 and 143. Residues Asn-257, Asn-342, and Asn-748 are each glycosylated (N-linked (GlcNAc...) asparagine).

This sequence belongs to the peptidase S9B family. DPPIV subfamily. As to quaternary structure, may form oligomers. Interacts with KCND1. Interacts with KCND2. In terms of processing, N-glycosylation is important for cell surface expression, specially at Asn-257, which is crucial. Found in serum, T-cells and brain (at protein level). Expressed in brain, pancreas, spinal cord and adrenal glands.

The protein resides in the cell membrane. Functionally, promotes cell surface expression of the potassium channel KCND2. Modulates the activity and gating characteristics of the potassium channel KCND2. Has no dipeptidyl aminopeptidase activity. The sequence is that of Inactive dipeptidyl peptidase 10 (DPP10) from Homo sapiens (Human).